Here is a 41-residue protein sequence, read N- to C-terminus: Photosystem I reaction center subunit IX (41 aa).

A helical membrane pass occupies residues 7–27; that stretch reads YLSTAPVLATVWMIITAGILI.

The protein belongs to the PsaJ family.

It is found in the cellular thylakoid membrane. Functionally, may help in the organization of the PsaE and PsaF subunits. The polypeptide is Photosystem I reaction center subunit IX (Trichodesmium erythraeum (strain IMS101)).